The sequence spans 158 residues: Phosphopantetheine adenylyltransferase (158 aa).

T8 serves as a coordination point for substrate. ATP is bound by residues 8–9 and H16; that span reads TF. Substrate-binding residues include K40, L72, and R86. ATP-binding positions include 87 to 89, E97, and 122 to 128; these read GLR and HAFISSS.

The protein belongs to the bacterial CoaD family. As to quaternary structure, homohexamer. The cofactor is Mg(2+).

The protein resides in the cytoplasm. It catalyses the reaction (R)-4'-phosphopantetheine + ATP + H(+) = 3'-dephospho-CoA + diphosphate. Its pathway is cofactor biosynthesis; coenzyme A biosynthesis; CoA from (R)-pantothenate: step 4/5. Reversibly transfers an adenylyl group from ATP to 4'-phosphopantetheine, yielding dephospho-CoA (dPCoA) and pyrophosphate. The polypeptide is Phosphopantetheine adenylyltransferase (Campylobacter jejuni subsp. jejuni serotype O:6 (strain 81116 / NCTC 11828)).